A 121-amino-acid chain; its full sequence is Basic phospholipase A2 homolog BnSP-7 (121 aa).

7 disulfide bridges follow: Cys-26-Cys-115, Cys-28-Cys-44, Cys-43-Cys-95, Cys-49-Cys-121, Cys-50-Cys-88, Cys-57-Cys-81, and Cys-75-Cys-86. Positions 105–117 (KKYRYHLKPFCKK) are important for membrane-damaging activities in eukaryotes and bacteria; heparin-binding.

Belongs to the phospholipase A2 family. Group II subfamily. K49 sub-subfamily. In terms of assembly, homodimer; non-covalently linked (probable alternative/compact dimer conformation in solution). Expressed by the venom gland.

It localises to the secreted. Heparin inhibits the neuromuscular effect, myotoxin activity and edema-inducing effects. Bromophenacyl bromide (BPB) inhibits the neuromuscular effect, the myotoxin activity and edema-inducing effects. Snake venom phospholipase A2 (PLA2) that lacks enzymatic activity. Is myotoxic and displays edema-inducing activity. Displays bactericidal activity and promotes the blockage of the neuromuscular contraction of the chick biventer cervicis muscle. Also disrupts artificial membranes, and provokes tissue damages characterized by edema, necrosis and inflammation. May act as pro-inflammatory mediators, inducing metalloproteinase and cytokine production from the inflammatory and satellite cells. A model of myotoxic mechanism has been proposed: an apo Lys49-PLA2 is activated by the entrance of a hydrophobic molecule (e.g. fatty acid) at the hydrophobic channel of the protein leading to a reorientation of a monomer. This reorientation causes a transition between 'inactive' to 'active' states, causing alignment of C-terminal and membrane-docking sites (MDoS) side-by-side and putting the membrane-disruption sites (MDiS) in the same plane, exposed to solvent and in a symmetric position for both monomers. The MDoS region stabilizes the toxin on membrane by the interaction of charged residues with phospholipid head groups. Subsequently, the MDiS region destabilizes the membrane with penetration of hydrophobic residues. This insertion causes a disorganization of the membrane, allowing an uncontrolled influx of ions (i.e. calcium and sodium), and eventually triggering irreversible intracellular alterations and cell death. This chain is Basic phospholipase A2 homolog BnSP-7, found in Bothrops pauloensis (Neuwied's lancehead).